The following is a 196-amino-acid chain: Large ribosomal subunit protein bL9 (196 aa).

It belongs to the bacterial ribosomal protein bL9 family.

In terms of biological role, binds to the 23S rRNA. The polypeptide is Large ribosomal subunit protein bL9 (Bradyrhizobium sp. (strain ORS 278)).